The sequence spans 491 residues: Glutamyl-tRNA(Gln) amidotransferase subunit A (491 aa).

Residues Lys-79 and Ser-158 each act as charge relay system in the active site. Residue Ser-182 is the Acyl-ester intermediate of the active site.

Belongs to the amidase family. GatA subfamily. Heterotrimer of A, B and C subunits.

The enzyme catalyses L-glutamyl-tRNA(Gln) + L-glutamine + ATP + H2O = L-glutaminyl-tRNA(Gln) + L-glutamate + ADP + phosphate + H(+). Allows the formation of correctly charged Gln-tRNA(Gln) through the transamidation of misacylated Glu-tRNA(Gln) in organisms which lack glutaminyl-tRNA synthetase. The reaction takes place in the presence of glutamine and ATP through an activated gamma-phospho-Glu-tRNA(Gln). The sequence is that of Glutamyl-tRNA(Gln) amidotransferase subunit A from Maricaulis maris (strain MCS10) (Caulobacter maris).